A 125-amino-acid polypeptide reads, in one-letter code: Small ribosomal subunit protein eS6 (125 aa).

The tract at residues Lys90–Gly109 is disordered.

It belongs to the eukaryotic ribosomal protein eS6 family. Part of the 30S ribosomal subunit.

The chain is Small ribosomal subunit protein eS6 from Pyrococcus furiosus (strain ATCC 43587 / DSM 3638 / JCM 8422 / Vc1).